We begin with the raw amino-acid sequence, 1538 residues long: Dicer-like protein 1 (1538 aa).

Residues 39–72 (DPAESSADVHKDEHSSDNSDNDNEAVPKPNDFSQ) are disordered. Over residues 45–55 (ADVHKDEHSSD) the composition is skewed to basic and acidic residues. In terms of domain architecture, Helicase ATP-binding spans 134–315 (LFERAKTQNT…EAATRLETLL (182 aa)). Residue 147–154 (LDTGSGKT) participates in ATP binding. The DEAH box signature appears at 260-263 (DEAH). Positions 460–619 (ELSKHFSDTT…ETLPEDRILH (160 aa)) constitute a Helicase C-terminal domain. In terms of domain architecture, Dicer dsRNA-binding fold spans 652 to 742 (AIAILARYAS…NSIYHRRLPA (91 aa)). Residues 892 to 1020 (DTVSFVHNND…ICAEPLRISA (129 aa)) enclose the PAZ domain. 2 consecutive RNase III domains span residues 1044–1203 (IALE…LSGG) and 1254–1406 (ARHV…VDSK). Mg(2+)-binding residues include glutamate 1295, aspartate 1392, and glutamate 1395. In terms of domain architecture, DRBM spans 1440–1508 (TFLHNKLTNE…SEKALAVLDG (69 aa)). Residues cysteine 1452, histidine 1479, cysteine 1520, and cysteine 1522 each coordinate Zn(2+).

The protein belongs to the helicase family. Dicer subfamily. Mg(2+) is required as a cofactor. Mn(2+) serves as cofactor.

Its function is as follows. Dicer-like endonuclease involved in cleaving double-stranded RNA in the RNA interference (RNAi) pathway. Produces 21 to 25 bp dsRNAs (siRNAs) which target the selective destruction of homologous RNAs leading to sequence-specific suppression of gene expression, called post-transcriptional gene silencing (PTGS). Part of a broad host defense response against viral infection and transposons. This is Dicer-like protein 1 (dcl1) from Neosartorya fischeri (strain ATCC 1020 / DSM 3700 / CBS 544.65 / FGSC A1164 / JCM 1740 / NRRL 181 / WB 181) (Aspergillus fischerianus).